Here is a 182-residue protein sequence, read N- to C-terminus: Probable RNA 2'-phosphotransferase (182 aa).

The protein belongs to the KptA/TPT1 family.

Its function is as follows. Removes the 2'-phosphate from RNA via an intermediate in which the phosphate is ADP-ribosylated by NAD followed by a presumed transesterification to release the RNA and generate ADP-ribose 1''-2''-cyclic phosphate (APPR&gt;P). May function as an ADP-ribosylase. This chain is Probable RNA 2'-phosphotransferase, found in Acetivibrio thermocellus (strain ATCC 27405 / DSM 1237 / JCM 9322 / NBRC 103400 / NCIMB 10682 / NRRL B-4536 / VPI 7372) (Clostridium thermocellum).